Consider the following 1910-residue polypeptide: A disintegrin and metalloproteinase with thrombospondin motifs 20 (1910 aa).

The first 21 residues, 1–21 (MWVAKWLTGLLYHLSLFITRS), serve as a signal peptide directing secretion. Positions 22–253 (WEVDFHPRQE…DERRHSRKKR (232 aa)) are excised as a propeptide. N-linked (GlcNAc...) asparagine glycosylation is found at Asn-92 and Asn-191. Residues 259–467 (RYIEIMVTAD…GYGECLLDKP (209 aa)) form the Peptidase M12B domain. 11 disulfides stabilise this stretch: Cys-334/Cys-387, Cys-363/Cys-369, Cys-381/Cys-462, Cys-419/Cys-446, Cys-489/Cys-511, Cys-500/Cys-521, Cys-506/Cys-540, Cys-534/Cys-545, Cys-568/Cys-605, Cys-572/Cys-610, and Cys-583/Cys-595. His-403 is a binding site for Zn(2+). Glu-404 is an active-site residue. His-407 and His-413 together coordinate Zn(2+). N-linked (GlcNAc...) asparagine glycosylation is present at Asn-445. The region spanning 468–555 (DEEIYNLPSE…VNKETETRPV (88 aa)) is the Disintegrin domain. In terms of domain architecture, TSP type-1 1 spans 556-611 (NGEWGPWEPYSSCSRTCGGGIESATRRCNRPEPRNGGNYCVGRRMKFRSCNTDSCP). N-linked (GlcNAc...) asparagine glycosylation is found at Asn-702, Asn-717, Asn-728, Asn-809, and Asn-870. Residues 724–846 (TGVFNSSHYG…FNIPLEERSD (123 aa)) are spacer. 14 consecutive TSP type-1 domains span residues 846–904 (DMFT…NTDC), 905–961 (ELRW…QELC), 966–1023 (VFTR…FSCP), 1024–1073 (SWAA…SPCE), 1076–1135 (TCAS…TPCS), 1152–1206 (KMAQ…DCFT), 1207–1264 (PCGE…AACP), 1304–1356 (RGNQ…QCGP), 1358–1416 (PCPQ…HACP), 1417–1475 (ADVS…VRCP), 1476–1531 (SWKA…QDCV), 1535–1588 (GMER…NPPC), 1589–1652 (NYIV…INSC), and 1654–1710 (HLAT…NDCK). An N-linked (GlcNAc...) asparagine glycan is attached at Asn-1061. N-linked (GlcNAc...) asparagine glycosylation is present at Asn-1456. Asn-1542 and Asn-1572 each carry an N-linked (GlcNAc...) asparagine glycan. The 200-residue stretch at 1711 to 1910 (SFTTCKEIQV…MTTGLPIQVI (200 aa)) folds into the GON domain. N-linked (GlcNAc...) asparagine glycosylation is found at Asn-1763, Asn-1781, and Asn-1852.

The cofactor is Zn(2+). In terms of processing, the precursor is cleaved by a furin endopeptidase. Glycosylated. Can be O-fucosylated by POFUT2 on a serine or a threonine residue found within the consensus sequence C1-X(2)-(S/T)-C2-G of the TSP type-1 repeat domains where C1 and C2 are the first and second cysteine residue of the repeat, respectively. Fucosylated repeats can then be further glycosylated by the addition of a beta-1,3-glucose residue by the glucosyltransferase, B3GALTL. Fucosylation mediates the efficient secretion of ADAMTS family members. Can also be C-glycosylated with one or two mannose molecules on tryptophan residues within the consensus sequence W-X-X-W of the TPRs, and N-glycosylated. These other glycosylations can also facilitate secretion. Very sparingly expressed, although is detected at low levels in testis, prostate, ovary, heart, placenta, lung and pancreas. Overexpressed in several brain, colon and breast carcinomas.

The protein localises to the secreted. The protein resides in the extracellular space. Its subcellular location is the extracellular matrix. In terms of biological role, may play a role in tissue-remodeling process occurring in both normal and pathological conditions. May have a protease-independent function in the transport from the endoplasmic reticulum to the Golgi apparatus of secretory cargos, mediated by the GON domain. The chain is A disintegrin and metalloproteinase with thrombospondin motifs 20 (ADAMTS20) from Homo sapiens (Human).